The sequence spans 435 residues: Tol-Pal system protein TolB (435 aa).

The N-terminal stretch at 1–20 (MRKIIAGVFIFVFLISNLYA) is a signal peptide.

This sequence belongs to the TolB family. In terms of assembly, the Tol-Pal system is composed of five core proteins: the inner membrane proteins TolA, TolQ and TolR, the periplasmic protein TolB and the outer membrane protein Pal. They form a network linking the inner and outer membranes and the peptidoglycan layer.

The protein resides in the periplasm. In terms of biological role, part of the Tol-Pal system, which plays a role in outer membrane invagination during cell division and is important for maintaining outer membrane integrity. This Francisella tularensis subsp. tularensis (strain WY96-3418) protein is Tol-Pal system protein TolB.